Here is a 113-residue protein sequence, read N- to C-terminus: UPF0482 protein YnfB (113 aa).

A signal peptide spans 1–28 (MKITLSKRIDLLAFLLPCALALSTTVHA).

Belongs to the UPF0482 family.

The sequence is that of UPF0482 protein YnfB from Escherichia coli O157:H7.